Consider the following 257-residue polypeptide: GTP cyclohydrolase 1 type 2 homolog (257 aa).

A divalent metal cation contacts are provided by His-65, Asp-103, His-221, and Glu-224.

It belongs to the GTP cyclohydrolase I type 2/NIF3 family. Homohexamer.

This Lactococcus lactis subsp. lactis (strain IL1403) (Streptococcus lactis) protein is GTP cyclohydrolase 1 type 2 homolog (ykiD).